Reading from the N-terminus, the 382-residue chain is V-type proton ATPase subunit C 1 (382 aa).

Thr2 carries the post-translational modification N-acetylthreonine.

It belongs to the V-ATPase C subunit family. As to quaternary structure, V-ATPase is a heteromultimeric enzyme made up of two complexes: the ATP-hydrolytic V1 complex and the proton translocation V0 complex. The V1 complex consists of three catalytic AB heterodimers that form a heterohexamer, three peripheral stalks each consisting of EG heterodimers, one central rotor including subunits D and F, and the regulatory subunits C and H. The proton translocation complex V0 consists of the proton transport subunit a, a ring of proteolipid subunits c9c'', rotary subunit d, subunits e and f, and the accessory subunits ATP6AP1/Ac45 and ATP6AP2/PRR. Ubiquitous. Abundant in brain, liver, kidney and testis.

It localises to the cytoplasmic vesicle. Its subcellular location is the secretory vesicle. The protein resides in the synaptic vesicle membrane. The protein localises to the clathrin-coated vesicle membrane. Functionally, subunit of the V1 complex of vacuolar(H+)-ATPase (V-ATPase), a multisubunit enzyme composed of a peripheral complex (V1) that hydrolyzes ATP and a membrane integral complex (V0) that translocates protons. V-ATPase is responsible for acidifying and maintaining the pH of intracellular compartments and in some cell types, is targeted to the plasma membrane, where it is responsible for acidifying the extracellular environment. Subunit C is necessary for the assembly of the catalytic sector of the enzyme and is likely to have a specific function in its catalytic activity. In Mus musculus (Mouse), this protein is V-type proton ATPase subunit C 1 (Atp6v1c1).